Consider the following 454-residue polypeptide: Natural cytotoxicity triggering receptor 3 ligand 1 (454 aa).

Residues 1-24 (MTWRAAASTCAALLILLWALTTEG) form the signal peptide. The Extracellular portion of the chain corresponds to 25-262 (DLKVEMMAGG…SETEKTDNFS (238 aa)). An Ig-like V-type domain is found at 27-138 (KVEMMAGGTQ…LKAQGTVQLE (112 aa)). Residues Asn43 and Asn57 are each glycosylated (N-linked (GlcNAc...) asparagine). The cysteines at positions 48 and 122 are disulfide-linked. 2 interaction with NCR3 regions span residues 59 to 62 (TSMG) and 127 to 130 (TPLK). The Ig-like C1-type domain maps to 143–244 (PASRLLLDQV…LHTPLRSNFT (102 aa)). Residues Cys163 and Cys228 are joined by a disulfide bond. N-linked (GlcNAc...) asparagine glycosylation is found at Asn174, Asn208, Asn216, Asn242, and Asn260. A helical membrane pass occupies residues 263 to 283 (IHWWPISFIGVGLVLLIVLIP). Topologically, residues 284-454 (WKKICNKSSS…QPPTLLLPLQ (171 aa)) are cytoplasmic. The retroviral-Gag-like stretch occupies residues 291 to 429 (SSSAYTPLKC…APILPVSPIW (139 aa)). Residues 395–454 (GKSIDDNSTKSEKQTPREHSDAVPDAPILPVSPIWEPPPATTSTTPVLSSQPPTLLLPLQ) form a disordered region. A compositionally biased stretch (basic and acidic residues) spans 397 to 416 (SIDDNSTKSEKQTPREHSDA). Low complexity predominate over residues 435 to 454 (TTSTTPVLSSQPPTLLLPLQ).

Monomer. Interacts specifically with NCR3, but not with other natural killer cell-activating receptors, including NCR1, NCR2 and KLRK1. Not detected in any normal tissue tested. Expressed at the surface of several tumor cell lines including T and B-lymphomas, myeloid leukemias, melanomas, carcinomas and large T SV40 antigen-transformed cells (at protein level).

Its subcellular location is the cell membrane. Functionally, triggers NCR3-dependent natural killer cell activation. The protein is Natural cytotoxicity triggering receptor 3 ligand 1 (NCR3LG1) of Homo sapiens (Human).